Reading from the N-terminus, the 921-residue chain is AdoMet-dependent rRNA methyltransferase SPB1 (921 aa).

S-adenosyl-L-methionine-binding residues include glycine 58, tryptophan 60, aspartate 78, aspartate 94, and aspartate 119. Residue lysine 159 is the Proton acceptor of the active site. Residues 367–414 (VEEMDEDDQIDDELARLNEEAARKARKERRRKNELRQKKILKMQLQMT) are a coiled coil. Disordered stretches follow at residues 448-476 (ALIQ…DPET), 491-604 (EFKQ…KRSL), 635-713 (ELDE…GKQK), 814-835 (LEKA…EKEK), and 866-921 (RGLK…GPRN). The span at 491–522 (EFKQKQSERDAKFRAKQARLQDAKNDSWHGIK) shows a compositional bias: basic and acidic residues. Composition is skewed to acidic residues over residues 523–542 (DDEE…ESEG), 555–568 (ETFD…EEDE), 635–684 (ELDE…DDFE), and 697–708 (DEEWDLNGEDEE). Positions 796–835 (IKKVAEAKARKKMRTLRRLEKAQKKAETINENEDISEKEK) form a coiled coil. Positions 814-823 (LEKAQKKAET) are enriched in basic and acidic residues. A compositionally biased stretch (basic residues) spans 868–879 (LKGRPKGTKGRY). Basic and acidic residues predominate over residues 880–892 (KMVDPRMKKELRA).

Belongs to the class I-like SAM-binding methyltransferase superfamily. RNA methyltransferase RlmE family. SPB1 subfamily. In terms of assembly, component of the nucleolar and nucleoplasmic pre-60S ribosomal particle.

The protein resides in the nucleus. It is found in the nucleolus. The enzyme catalyses a ribonucleotide in rRNA + S-adenosyl-L-methionine = a 2'-O-methylribonucleotide in rRNA + S-adenosyl-L-homocysteine + H(+). Functionally, required for proper assembly of pre-ribosomal particles during the biogenesis of the 60S ribosomal subunit. The chain is AdoMet-dependent rRNA methyltransferase SPB1 from Mycosarcoma maydis (Corn smut fungus).